The following is an 85-amino-acid chain: ATP synthase subunit c (85 aa).

The next 2 membrane-spanning stretches (helical) occupy residues 10 to 30 (IAVS…FGIL) and 53 to 73 (FIVA…ALLF).

The protein belongs to the ATPase C chain family. F-type ATPases have 2 components, F(1) - the catalytic core - and F(0) - the membrane proton channel. F(1) has five subunits: alpha(3), beta(3), gamma(1), delta(1), epsilon(1). F(0) has three main subunits: a(1), b(2) and c(10-14). The alpha and beta chains form an alternating ring which encloses part of the gamma chain. F(1) is attached to F(0) by a central stalk formed by the gamma and epsilon chains, while a peripheral stalk is formed by the delta and b chains.

The protein localises to the cell inner membrane. F(1)F(0) ATP synthase produces ATP from ADP in the presence of a proton or sodium gradient. F-type ATPases consist of two structural domains, F(1) containing the extramembraneous catalytic core and F(0) containing the membrane proton channel, linked together by a central stalk and a peripheral stalk. During catalysis, ATP synthesis in the catalytic domain of F(1) is coupled via a rotary mechanism of the central stalk subunits to proton translocation. Functionally, key component of the F(0) channel; it plays a direct role in translocation across the membrane. A homomeric c-ring of between 10-14 subunits forms the central stalk rotor element with the F(1) delta and epsilon subunits. The protein is ATP synthase subunit c of Idiomarina loihiensis (strain ATCC BAA-735 / DSM 15497 / L2-TR).